We begin with the raw amino-acid sequence, 86 residues long: Large ribosomal subunit protein eL20 (86 aa).

Belongs to the eukaryotic ribosomal protein eL20 family. Part of the 50S ribosomal subunit. Binds 23S rRNA.

This chain is Large ribosomal subunit protein eL20, found in Saccharolobus islandicus (strain Y.N.15.51 / Yellowstone #2) (Sulfolobus islandicus).